The sequence spans 410 residues: Zinc transporter ttm-1 (410 aa).

Low complexity-rich tracts occupy residues 1–13 and 35–46; these read MTIS…SIRL and SVSSSDSGVSAD. The disordered stretch occupies residues 1–94; that stretch reads MTISMISPSS…GAHKHSHDEK (94 aa). The Cytoplasmic segment spans residues 1–103; that stretch reads MTISMISPSS…KYQKGRRAEK (103 aa). Basic residues predominate over residues 50–69; sequence HHHHGHGHGHSHGGHGHSHT. The chain crosses the membrane as a helical span at residues 104 to 124; sequence VLWAVAALSAVFIAAEFVGGF. The Extracellular portion of the chain corresponds to 125-129; it reads WAQSL. Residues 130 to 150 traverse the membrane as a helical segment; sequence AIMTDAGHMLSDLLSFIISIF. Over 151 to 171 the chain is Cytoplasmic; that stretch reads AIRCARLPASKRLSFGYERAE. Residues 172 to 192 form a helical membrane-spanning segment; the sequence is VLGALTSVIILWVLTTVLVVV. Residues 193–208 are Extracellular-facing; the sequence is AIQRIVNNEHEVDADV. Residues 209–229 form a helical membrane-spanning segment; the sequence is MLITAGVGVLFNIVMGLVLHF. Residues 230–258 lie on the Cytoplasmic side of the membrane; sequence GTGGHGHTHGGHSSHGHAHDGKNVNVRAA. A helical transmembrane segment spans residues 259–279; sequence LIHVIGDLVQSIGVLIAALII. Position 280 (arginine 280) is a topological domain, extracellular. Residues 281–301 traverse the membrane as a helical segment; it reads FTGWTLADPICTFLFSIIVLF. At 302–410 the chain is on the cytoplasmic side; it reads TTVTVMRDIF…CDTCQQQETA (109 aa).

This sequence belongs to the cation diffusion facilitator (CDF) transporter (TC 2.A.4) family. SLC30A subfamily. As to expression, isoform a: Expressed in the hypodermis and the intestine. Isoform b: Expressed in the intestine, head neurons, seam cells, hypodermis, and the vulva.

Its subcellular location is the cytoplasmic vesicle membrane. The protein resides in the apical cell membrane. Promotes excretion of zinc from intestinal cells into the intestinal lumen in response to increased dietary zinc. Involved in cadmium resistance, possibly by promoting its transport from cells. Involved in resistance to B.thuringiensis pore-forming toxin Cry5B downstream of the sek-1 and pmk-1 MAPK kinase pathway. This Caenorhabditis elegans protein is Zinc transporter ttm-1.